The sequence spans 874 residues: MKTTAEIRQAFLDFFHSKGHQIVDSSSLVPENDPTLLFTNAGMNQFKDVFLGLDTRSYTRATTAQRCVRAGGKHNDLENVGYTARHHTFFEMLGNFSFGDYFKQDAIKFAWEFLTSPEWLGLPEEKLYVTVYETDDEAYGIWHKGVGVPENHIIRIGDNKGAPYASDNFWAMGDTGPCGPCTEIFYDHGEHVWGGLPGSEEEDGDRYIEVWNIVFMQFNRLADGTMEKLPKPSVDTGMGLERISAVIQHVNSNYDIDIFQKLIAKVAELTGEKDLTNKSLRVIADHIRSCAYLIVDGVIPSNEGRGYVLRRIIRRAVRHGHLLGAKDTFFYKLVPVLIDVMATAGKDVKAKQANVEKLLRLEEEQFARTLERGLALLDEALINVKDGVLSGEVAFKLYDTYGFPLDLTADVCRERNIRIDEEGFEREMEVQRLRAQAASRFGVDYNNVIRVEGTTTFEGYTEAETQAKVTALFYEGKSVESISAGQSAVVILDDTPFYAESGGQIGDRGCLIATNMRFDVKDTQKYGQVFGHIGTLIQGTLNVGQTINAVVDTEHRIKTSLNHSATHLLHAALRQVLGSHVAQKGSLVSDTILRFDFAQPEAISQEQLFEIECLVNQHIRANHLVVTEVMPIDEAKAKGAMALFGEKYGDVVRVVKMGEFSIELCGGIHVKRTGEIGLFKIVSGSAIAAGVRRVEAVTGEGAINWLQQQQVLLMQSADLLKSDANSLVEKIQQLQDKAKKTEKELQALKEKSAMKAGSDIAKSAVEINGVSVIVQQLENMDVKSLRVIVDDLKNQLGSAVIAFVTKNEDKVNLVVGVTTDLTSKVKAGELVNLMAQQVGGKGGGRPDMAMAGGSQPENISKALTVCNEWLHKNL.

Zn(2+)-binding residues include His-563, His-567, Cys-665, and His-669.

The protein belongs to the class-II aminoacyl-tRNA synthetase family. Zn(2+) serves as cofactor.

Its subcellular location is the cytoplasm. It catalyses the reaction tRNA(Ala) + L-alanine + ATP = L-alanyl-tRNA(Ala) + AMP + diphosphate. Its function is as follows. Catalyzes the attachment of alanine to tRNA(Ala) in a two-step reaction: alanine is first activated by ATP to form Ala-AMP and then transferred to the acceptor end of tRNA(Ala). Also edits incorrectly charged Ser-tRNA(Ala) and Gly-tRNA(Ala) via its editing domain. This chain is Alanine--tRNA ligase, found in Histophilus somni (strain 2336) (Haemophilus somnus).